The following is a 358-amino-acid chain: Heat-inducible transcription repressor HrcA (358 aa).

The protein belongs to the HrcA family.

Its function is as follows. Negative regulator of class I heat shock genes (grpE-dnaK-dnaJ and groELS operons). Prevents heat-shock induction of these operons. This Caulobacter vibrioides (strain ATCC 19089 / CIP 103742 / CB 15) (Caulobacter crescentus) protein is Heat-inducible transcription repressor HrcA.